The sequence spans 361 residues: 5-formaminoimidazole-4-carboxamide-1-(beta)-D-ribofuranosyl 5'-monophosphate synthetase (361 aa).

His27 and Ser94 together coordinate 5-amino-1-(5-phospho-beta-D-ribosyl)imidazole-4-carboxamide. Residues 116 to 348 form the ATP-grasp domain; that stretch reads RRILRWESER…MGQRIAREIK (233 aa). ATP is bound by residues 156 to 166, 199 to 202, and Glu230; these read KFPGARGGRGY and EEYV. Asn258 is a 5-amino-1-(5-phospho-beta-D-ribosyl)imidazole-4-carboxamide binding site. The Mg(2+) site is built by Gln297 and Glu310.

This sequence belongs to the phosphohexose mutase family. Homohexamer. Dimer of trimers. The cofactor is Mg(2+). Requires Mn(2+) as cofactor.

It catalyses the reaction 5-amino-1-(5-phospho-beta-D-ribosyl)imidazole-4-carboxamide + formate + ATP = 5-formamido-1-(5-phospho-D-ribosyl)imidazole-4-carboxamide + ADP + phosphate. It functions in the pathway purine metabolism; IMP biosynthesis via de novo pathway; 5-formamido-1-(5-phospho-D-ribosyl)imidazole-4-carboxamide from 5-amino-1-(5-phospho-D-ribosyl)imidazole-4-carboxamide (formate route): step 1/1. Inhibited by ADP. Functionally, catalyzes the ATP- and formate-dependent formylation of 5-aminoimidazole-4-carboxamide-1-beta-d-ribofuranosyl 5'-monophosphate (AICAR) to 5-formaminoimidazole-4-carboxamide-1-beta-d-ribofuranosyl 5'-monophosphate (FAICAR) in the absence of folates. This Methanocaldococcus jannaschii (strain ATCC 43067 / DSM 2661 / JAL-1 / JCM 10045 / NBRC 100440) (Methanococcus jannaschii) protein is 5-formaminoimidazole-4-carboxamide-1-(beta)-D-ribofuranosyl 5'-monophosphate synthetase.